The following is a 168-amino-acid chain: Short form salivary protein D7R2 (168 aa).

The first 21 residues, 1–21 (MFKKLLLSVGLVWCLISLGQA), serve as a signal peptide directing secretion. 3 disulfide bridges follow: Cys-30-Cys-62, Cys-43-Cys-168, and Cys-101-Cys-120. Positions 31 and 46 each coordinate noradrenaline. Glu-31 is a serotonin binding site. Residues His-59, Tyr-118, Asp-135, and Glu-138 each contribute to the serotonin site. Histamine is bound by residues Tyr-118, Asp-135, and Glu-138. Residues Asp-135 and Glu-138 each coordinate noradrenaline.

This sequence belongs to the PBP/GOBP family. Female saliva (at protein level). Female salivary gland. Not detected in female carcass without salivary glands. Not detected in male tissues.

The protein resides in the secreted. Functionally, modulates blood feeding of female mosquitoes on vertebrate species by binding and sequestering different mediators involved in the host response. Binds serotonin, noradrenaline, histamine and adrenaline. Inhibits histamine-, serotonin- and noradrenaline-induced smooth muscle contraction. Exhibits vasodilating activity. This is Short form salivary protein D7R2 from Anopheles gambiae (African malaria mosquito).